Reading from the N-terminus, the 208-residue chain is Large ribosomal subunit protein uL4 (208 aa).

The disordered stretch occupies residues Arg45 to Ser77.

Belongs to the universal ribosomal protein uL4 family. As to quaternary structure, part of the 50S ribosomal subunit.

In terms of biological role, one of the primary rRNA binding proteins, this protein initially binds near the 5'-end of the 23S rRNA. It is important during the early stages of 50S assembly. It makes multiple contacts with different domains of the 23S rRNA in the assembled 50S subunit and ribosome. Its function is as follows. Forms part of the polypeptide exit tunnel. This is Large ribosomal subunit protein uL4 from Christiangramia forsetii (strain DSM 17595 / CGMCC 1.15422 / KT0803) (Gramella forsetii).